A 258-amino-acid polypeptide reads, in one-letter code: Ribonuclease PH (258 aa).

Phosphate is bound by residues Arg86 and 124–126; that span reads GTR.

It belongs to the RNase PH family. As to quaternary structure, homohexameric ring arranged as a trimer of dimers.

It carries out the reaction tRNA(n+1) + phosphate = tRNA(n) + a ribonucleoside 5'-diphosphate. Functionally, phosphorolytic 3'-5' exoribonuclease that plays an important role in tRNA 3'-end maturation. Removes nucleotide residues following the 3'-CCA terminus of tRNAs; can also add nucleotides to the ends of RNA molecules by using nucleoside diphosphates as substrates, but this may not be physiologically important. Probably plays a role in initiation of 16S rRNA degradation (leading to ribosome degradation) during starvation. This is Ribonuclease PH from Caldicellulosiruptor saccharolyticus (strain ATCC 43494 / DSM 8903 / Tp8T 6331).